A 301-amino-acid polypeptide reads, in one-letter code: G-protein coupled receptor homolog U51 (301 aa).

The Extracellular portion of the chain corresponds to 1–15 (MEKETKSLAWPATAE). A helical membrane pass occupies residues 16–36 (FYGWVFIFSSIQLCTMVLLTV). The Cytoplasmic portion of the chain corresponds to 37–48 (RFNSFKVGREYA). Residues 49-69 (VFTFAGMSFNCFLLPIKMGLL) traverse the membrane as a helical segment. The Extracellular portion of the chain corresponds to 70 to 82 (SGHWSLPRDFCAI). A helical transmembrane segment spans residues 83–103 (LLYIDDFSIYFSSWSLVFMAI). The Cytoplasmic segment spans residues 104 to 122 (ERINHFCYSTPLLNENSKA). Residues 123–143 (LAKVCFPIVWIISGVQALQML) traverse the membrane as a helical segment. Topologically, residues 144–168 (NNYKATALQNETPQCFLAFLRSGYD) are extracellular. Residues 169 to 189 (MWLMLVYSVMIPVMLVFIYIY) form a helical membrane-spanning segment. Residues 190–199 (SKNFMLLKDE) lie on the Cytoplasmic side of the membrane. A helical membrane pass occupies residues 200–220 (LSTVTTYLCIYLLLGTIAHLP). The Extracellular portion of the chain corresponds to 221-238 (KAGLSEIESDKIFYGLRD). A helical membrane pass occupies residues 239 to 259 (IFMALPVLKVYYIPVMAYCMA). Topologically, residues 260-301 (CDDHTVPVRLCSIWLVNLCKKCFSCTRREKESDLEVGIKMLK) are cytoplasmic.

The protein belongs to the G-protein coupled receptor 1 family.

Its subcellular location is the host cell membrane. The sequence is that of G-protein coupled receptor homolog U51 (U51) from Homo sapiens (Human).